The following is a 905-amino-acid chain: DNA gyrase subunit A (905 aa).

Residues 35 to 524 (IPDVRDGLKP…GEFDQDIEDL (490 aa)) form the Topo IIA-type catalytic domain. Tyr123 (O-(5'-phospho-DNA)-tyrosine intermediate) is an active-site residue. Positions 551–557 (QKRGGKG) match the GyrA-box motif.

This sequence belongs to the type II topoisomerase GyrA/ParC subunit family. In terms of assembly, heterotetramer, composed of two GyrA and two GyrB chains. In the heterotetramer, GyrA contains the active site tyrosine that forms a transient covalent intermediate with DNA, while GyrB binds cofactors and catalyzes ATP hydrolysis.

It is found in the cytoplasm. It catalyses the reaction ATP-dependent breakage, passage and rejoining of double-stranded DNA.. Its function is as follows. A type II topoisomerase that negatively supercoils closed circular double-stranded (ds) DNA in an ATP-dependent manner to modulate DNA topology and maintain chromosomes in an underwound state. Negative supercoiling favors strand separation, and DNA replication, transcription, recombination and repair, all of which involve strand separation. Also able to catalyze the interconversion of other topological isomers of dsDNA rings, including catenanes and knotted rings. Type II topoisomerases break and join 2 DNA strands simultaneously in an ATP-dependent manner. The chain is DNA gyrase subunit A from Rickettsia typhi (strain ATCC VR-144 / Wilmington).